The primary structure comprises 427 residues: DNA topoisomerase 6 subunit A (427 aa).

The region spanning 76 to 209 (LSLSSVQTEI…LNVIAAEKGV (134 aa)) is the Topo IIA-type catalytic domain. Residue tyrosine 170 is the O-(5'-phospho-DNA)-tyrosine intermediate of the active site. Glutamate 256 and aspartate 308 together coordinate Mg(2+).

The protein belongs to the TOP6A family. As to quaternary structure, homodimer. Heterotetramer of two TOP6A and two TOP6B subunits. Interacts with BIN4 and RHL1. Mg(2+) serves as cofactor. Highly expressed in leaves, stems, flowers and seedlings.

It is found in the nucleus. The enzyme catalyses ATP-dependent breakage, passage and rejoining of double-stranded DNA.. Component of the DNA topoisomerase VI involved in chromatin organization and progression of endoreduplication cycles. Relaxes both positive and negative superturns and exhibits a strong decatenase activity. Involved in cell-elongation processes. The sequence is that of DNA topoisomerase 6 subunit A from Arabidopsis thaliana (Mouse-ear cress).